A 327-amino-acid polypeptide reads, in one-letter code: Malate dehydrogenase (327 aa).

Residue 11–17 (GAAGQIG) coordinates NAD(+). The substrate site is built by Arg-92 and Arg-98. Residues Asn-105, Gln-112, and 129-131 (VGN) each bind NAD(+). Substrate contacts are provided by Asn-131 and Arg-162. His-187 (proton acceptor) is an active-site residue.

Belongs to the LDH/MDH superfamily. MDH type 2 family.

It catalyses the reaction (S)-malate + NAD(+) = oxaloacetate + NADH + H(+). Its function is as follows. Catalyzes the reversible oxidation of malate to oxaloacetate. The polypeptide is Malate dehydrogenase (Thermus thermophilus (strain ATCC BAA-163 / DSM 7039 / HB27)).